Here is a 391-residue protein sequence, read N- to C-terminus: Steroid 3-ketoacyl-CoA thiolase (391 aa).

Catalysis depends on Cys93, which acts as the Acyl-thioester intermediate. CoA-binding positions include Gln151, 221–223 (RET), and Ser246. Catalysis depends on proton acceptor residues His347 and Cys377. Residue Gly379 participates in substrate binding.

It belongs to the thiolase-like superfamily. Thiolase family. As to quaternary structure, dimer of dimers.

It catalyses the reaction an acyl-CoA + acetyl-CoA = a 3-oxoacyl-CoA + CoA. It carries out the reaction 3-oxochol-4-en-22-oyl-CoA + acetyl-CoA = 3,22-dioxochol-4-en-24-oyl-CoA + CoA. The protein operates within steroid metabolism; cholesterol degradation. Involved in the beta-oxidation of the cholesterol side chain. It is important for utilization of cholesterol as a sole carbon source in vitro and for full virulence in the chronic stage of mouse lung infection. Catalyzes the thiolysis of 3,22-dioxochol-4-en-24-oyl-CoA to yield 3-oxo-4-pregnene-20-carboxyl-CoA (3-OPC-CoA) and acetyl-CoA. Also able to use acetoacetyl-CoA (AcAcCoA) as substrate. The protein is Steroid 3-ketoacyl-CoA thiolase (fadA5) of Mycobacterium tuberculosis (strain ATCC 25618 / H37Rv).